The following is a 500-amino-acid chain: LEM protein 2 (500 aa).

The 45-residue stretch at methionine 1–glycine 45 folds into the LEM domain. Topologically, residues methionine 1 to alanine 325 are nuclear. A disordered region spans residues lysine 39 to isoleucine 202. Residues alanine 46–proline 57 are compositionally biased toward low complexity. The span at alanine 58–proline 75 shows a compositional bias: pro residues. The segment covering alanine 77–alanine 89 has biased composition (low complexity). Positions glutamate 103–isoleucine 122 are enriched in acidic residues. Low complexity-rich tracts occupy residues serine 130–serine 141 and asparagine 168–serine 197. The chain crosses the membrane as a helical span at residues isoleucine 326–leucine 346. Over threonine 347–tyrosine 378 the chain is Perinuclear space. The helical transmembrane segment at alanine 379–glycine 399 threads the bilayer. Topologically, residues histidine 400–tryptophan 500 are nuclear.

As to quaternary structure, interacts with lmn-1. Interacts (via LEM domain and the C-terminal nuclear domain) with baf-1. In terms of tissue distribution, ubiquitous. High expression in germline and intestine.

Its subcellular location is the nucleus inner membrane. The protein localises to the nucleus envelope. It is found in the chromosome. Nuclear lamina-associated inner nuclear membrane protein that is involved in cell division, nuclear structure organization, maintenance of nuclear envelope integrity and nuclear envelope reformation after mitosis. In interphase cells, plays a role in anchoring and spatial arrangement of chromosome arms at the nuclear periphery, forming so-called lem-2 subdomains. Both arms of autosomes but only the left arm of the X chromosome are anchored in lem-2 subdomains; sequences bound by lem-2 are mainly repetitive chromosome sequences and inactive genes. Involved in chromosome segregation and cell division, probably via its interaction with the nuclear intermediate filament protein lmn-1, the main component of nuclear lamina. Required to organize the distribution of lmn-1, nuclear pore complexes (NPCs) and chromatin in mitotically active cells. Involved in the nuclear positioning and efficient anchoring of microtubule-organizing centers (MTOCs) to the nuclear envelope during mitosis as well as on maintaining correct nuclear morphology. Contributes to closure of nuclear envelope (NE) holes and prevents excess nuclear membranes after meiosis and mitosis. Together with emr-1, plays a role in baf-1 enrichment at the nuclear envelope in anaphase. Together with emr-1, involved in muscle cell attachment to hypodermal cells, as well as muscle cell location and sarcomere organization. May play a role in radiation-induced DNA damage repair response. This Caenorhabditis elegans protein is LEM protein 2 (lem-2).